The primary structure comprises 164 residues: Diphosphoinositol polyphosphate phosphohydrolase 3-beta (164 aa).

Residues Arg9, 17-19 (KKR), and 38-40 (SSR) each bind substrate. The 128-residue stretch at 17-144 (KKRAACLCFR…VHAEYLEKLK (128 aa)) folds into the Nudix hydrolase domain. Residues Gly49 and Glu65 each contribute to the Mg(2+) site. Residues 50-71 (GGMEPEEEPGGAAVREVYEEAG) carry the Nudix box motif. The active-site Proton acceptor is the Glu68. Glu69 contributes to the Mg(2+) binding site. Substrate is bound by residues 89 to 91 (RKH), Arg115, and Lys133. A disordered region spans residues 144 to 164 (KLGGSPTNGNSMAPSSPDSDP). Polar residues predominate over residues 148–164 (SPTNGNSMAPSSPDSDP).

Belongs to the Nudix hydrolase family. DIPP subfamily. Mg(2+) is required as a cofactor. Requires Mn(2+) as cofactor. In terms of tissue distribution, mainly expressed in testis and, at lower level in brain. According to PubMed:12121577, it is also expressed in pancreas and weakly expressed in thymus, prostate, ovary, lung, small intestine and heart.

The protein resides in the cytoplasm. The catalysed reaction is diphospho-myo-inositol polyphosphate + H2O = myo-inositol polyphosphate + phosphate.. The enzyme catalyses P(1),P(6)-bis(5'-adenosyl) hexaphosphate + H2O = adenosine 5'-pentaphosphate + AMP + 2 H(+). It carries out the reaction P(1),P(5)-bis(5'-adenosyl) pentaphosphate + H2O = adenosine 5'-tetraphosphate + AMP + 2 H(+). Cleaves a beta-phosphate from the diphosphate groups in PP-InsP5 (diphosphoinositol pentakisphosphate), suggesting that it may play a role in signal transduction. Also able to catalyze the hydrolysis of dinucleoside oligophosphates, with Ap6A and Ap5A being the preferred substrates. The major reaction products are ADP and p4a from Ap6A and ADP and ATP from Ap5A. Also able to hydrolyze 5-phosphoribose 1-diphosphate. In Homo sapiens (Human), this protein is Diphosphoinositol polyphosphate phosphohydrolase 3-beta.